We begin with the raw amino-acid sequence, 692 residues long: Junctophilin-2 (692 aa).

At 1–670 (MSGGRFDFDD…EVEVEEVPNT (670 aa)) the chain is on the cytoplasmic side. MORN repeat units follow at residues 14–36 (YCGGWEGGKAHGHGLCTGPKGQG), 38–59 (YSGSWNFGFEVAGVYTWPSGNT), 60–79 (FEGYWSQGKRHGLGIETKGR), 82–104 (YKGEWTHGFKGRYGIRQSTNSGA), 106–128 (YEGTWNNGLQDGYGTETYADGGT), and 129–151 (YQGQFTNGMRHGYGVRQSVPYGM). Phosphoserine occurs at positions 162 and 165. Disordered regions lie at residues 164 to 190 (SSLRSEHSNGTVAPDSPAADGPTLPLP) and 246 to 273 (LSSGASDAASTGSLAEGAEGPDDAAAPF). MORN repeat units lie at residues 285–307 (YMGEWKNDKRSGFGVSERSSGLR) and 308–330 (YEGEWLDNLRHGYGRTTLPDGHR). The short motif at 345-359 (KRRVLPLKSNKVRQK) is the Bipartite nuclear localization signal element. Residues 439 to 661 (NSESLLEPRE…KEVAQEAEAE (223 aa)) form a disordered region. Residues S440, S442, and S462 each carry the phosphoserine modification. Over residues 457-471 (ERPRESPQLHERETP) the composition is skewed to basic and acidic residues. Phosphothreonine is present on T470. Residues 474–487 (EGGPPSPAGTPPQP) show a composition bias toward pro residues. S479 carries the phosphoserine modification. At T483 the chain carries Phosphothreonine. The Nuclear localization signal motif lies at 488 to 492 (KRPRP). 2 positions are modified to phosphoserine: S527 and S533. The segment covering 573 to 582 (PLEDEPEPEP) has biased composition (acidic residues). S589, S593, S604, and S609 each carry phosphoserine. Residues 627-640 (AEPKAKARKTEARG) are compositionally biased toward basic and acidic residues. The chain crosses the membrane as a helical; Anchor for type IV membrane protein span at residues 671–691 (VLICMVILLNIGLAILFVHLL).

This sequence belongs to the junctophilin family. Interacts with TRPC3. Interacts with BAG5 and HSPA8; the interaction with HSPA8 is increased in the presence of BAG5. Junctophilin-2 N-terminal fragment: Interacts with MEF2C. In terms of processing, proteolytically cleaved by calpain in response to cardiac stress. The major cleavage site takes place at the C-terminus and leads to the release of the Junctophilin-2 N-terminal fragment chain (JP2NT). Phosphorylation on Ser-165, probably by PKC, affects RYR1-mediated calcium ion release, interaction with TRPC3, and skeletal muscle myotubule development.

The protein localises to the cell membrane. It is found in the sarcoplasmic reticulum membrane. It localises to the endoplasmic reticulum membrane. The protein resides in the nucleus. In terms of biological role, membrane-binding protein that provides a structural bridge between the plasma membrane and the sarcoplasmic reticulum and is required for normal excitation-contraction coupling in cardiomyocytes. Provides a structural foundation for functional cross-talk between the cell surface and intracellular Ca(2+) release channels by maintaining the 12-15 nm gap between the sarcolemma and the sarcoplasmic reticulum membranes in the cardiac dyads. Necessary for proper intracellular Ca(2+) signaling in cardiac myocytes via its involvement in ryanodine receptor-mediated calcium ion release. Contributes to the construction of skeletal muscle triad junctions. Transcription repressor required to safeguard against the deleterious effects of cardiac stress. Generated following cleavage of the Junctophilin-2 chain by calpain in response to cardiac stress in cardiomyocytes. Following cleavage and release from the membrane, translocates to the nucleus, binds DNA and represses expression of genes implicated in cell growth and differentiation, hypertrophy, inflammation and fibrosis. Modifies the transcription profile and thereby attenuates pathological remodeling in response to cardiac stress. Probably acts by competing with MEF2 transcription factors and TATA-binding proteins. In Rattus norvegicus (Rat), this protein is Junctophilin-2.